The sequence spans 166 residues: Endoribonuclease YbeY (166 aa).

Zn(2+) is bound by residues His111, His115, and His121. A disordered region spans residues 141 to 166; that stretch reads LGYPDPYADDESADHPHSDTPSKDHE. The segment covering 153–166 has biased composition (basic and acidic residues); sequence ADHPHSDTPSKDHE.

The protein belongs to the endoribonuclease YbeY family. The cofactor is Zn(2+).

The protein localises to the cytoplasm. In terms of biological role, single strand-specific metallo-endoribonuclease involved in late-stage 70S ribosome quality control and in maturation of the 3' terminus of the 16S rRNA. The protein is Endoribonuclease YbeY of Pseudomonas syringae pv. tomato (strain ATCC BAA-871 / DC3000).